Here is a 296-residue protein sequence, read N- to C-terminus: GTP-binding protein GEM (296 aa).

2 disordered regions span residues 1–20 and 37–68; these read MTLN…PQQQ and PHQY…SVIS. A compositionally biased stretch (low complexity) spans 57–68; that stretch reads SWSSDSTDSVIS. GTP contacts are provided by residues 82–89 and 191–194; these read GEQGVGKS and NKSD. The calmodulin-binding stretch occupies residues 266 to 285; it reads ARRFWGKIVAKNNKNMAFKL.

The protein belongs to the small GTPase superfamily. RGK family. Interacts with calmodulin in a Ca(2+)-dependent manner. Binds ROCK1. In terms of processing, phosphorylated on tyrosine residues.

It is found in the cell membrane. In terms of biological role, could be a regulatory protein, possibly participating in receptor-mediated signal transduction at the plasma membrane. Has guanine nucleotide-binding activity but undetectable intrinsic GTPase activity. This is GTP-binding protein GEM (GEM) from Pongo abelii (Sumatran orangutan).